A 167-amino-acid chain; its full sequence is Periplasmic nitrate reductase, electron transfer subunit (167 aa).

An N-terminal signal peptide occupies residues 1-34 (MRRAHRAGERVMMKRFGIALLAVAIAAGASSLTA). Residues 40-65 (GLHGPAPLNDEGPAPPMLPNRNTSER) form a disordered region. Heme c-binding residues include His79, Cys93, Cys96, His97, His114, Cys133, Cys136, and His137.

It belongs to the NapB family. Component of the periplasmic nitrate reductase NapAB complex composed of NapA and NapB. Post-translationally, binds 2 heme C groups per subunit.

It is found in the periplasm. Electron transfer subunit of the periplasmic nitrate reductase complex NapAB. Receives electrons from the membrane-anchored tetraheme c-type NapC protein and transfers these to NapA subunit, thus allowing electron flow between membrane and periplasm. Essential for periplasmic nitrate reduction with nitrate as the terminal electron acceptor. In Bradyrhizobium japonicum, this protein is Periplasmic nitrate reductase, electron transfer subunit.